Reading from the N-terminus, the 359-residue chain is Phospho-N-acetylmuramoyl-pentapeptide-transferase (359 aa).

The next 10 helical transmembrane spans lie at 3-23 (QILF…PVLI), 53-73 (GGVA…LIGI), 84-104 (GLLV…DDFI), 117-137 (TAKL…ALQF), 156-176 (IATV…LVSA), 187-207 (LDGL…IITF), 231-251 (LALI…WNAA), 255-275 (IFMG…LSIT), 283-303 (VVIG…VAVF), and 330-350 (VIIR…ALFY).

It belongs to the glycosyltransferase 4 family. MraY subfamily. The cofactor is Mg(2+).

The protein resides in the cell membrane. The enzyme catalyses UDP-N-acetyl-alpha-D-muramoyl-L-alanyl-gamma-D-glutamyl-meso-2,6-diaminopimeloyl-D-alanyl-D-alanine + di-trans,octa-cis-undecaprenyl phosphate = di-trans,octa-cis-undecaprenyl diphospho-N-acetyl-alpha-D-muramoyl-L-alanyl-D-glutamyl-meso-2,6-diaminopimeloyl-D-alanyl-D-alanine + UMP. The protein operates within cell wall biogenesis; peptidoglycan biosynthesis. Its function is as follows. Catalyzes the initial step of the lipid cycle reactions in the biosynthesis of the cell wall peptidoglycan: transfers peptidoglycan precursor phospho-MurNAc-pentapeptide from UDP-MurNAc-pentapeptide onto the lipid carrier undecaprenyl phosphate, yielding undecaprenyl-pyrophosphoryl-MurNAc-pentapeptide, known as lipid I. The polypeptide is Phospho-N-acetylmuramoyl-pentapeptide-transferase (Rhodococcus jostii (strain RHA1)).